A 368-amino-acid chain; its full sequence is Flagellar P-ring protein (368 aa).

Residues 1–24 (MNSIFRKIVFAAFLLLALPQFALA) form the signal peptide.

The protein belongs to the FlgI family. The basal body constitutes a major portion of the flagellar organelle and consists of four rings (L,P,S, and M) mounted on a central rod.

It localises to the periplasm. The protein localises to the bacterial flagellum basal body. In terms of biological role, assembles around the rod to form the L-ring and probably protects the motor/basal body from shearing forces during rotation. The chain is Flagellar P-ring protein from Geotalea uraniireducens (strain Rf4) (Geobacter uraniireducens).